The sequence spans 140 residues: 3-hydroxyacyl-[acyl-carrier-protein] dehydratase FabZ (140 aa).

Residue H47 is part of the active site.

This sequence belongs to the thioester dehydratase family. FabZ subfamily.

It is found in the cytoplasm. It catalyses the reaction a (3R)-hydroxyacyl-[ACP] = a (2E)-enoyl-[ACP] + H2O. Involved in unsaturated fatty acids biosynthesis. Catalyzes the dehydration of short chain beta-hydroxyacyl-ACPs and long chain saturated and unsaturated beta-hydroxyacyl-ACPs. The sequence is that of 3-hydroxyacyl-[acyl-carrier-protein] dehydratase FabZ from Streptococcus pneumoniae (strain CGSP14).